A 631-amino-acid polypeptide reads, in one-letter code: Sphingomyelin phosphodiesterase (631 aa).

The tract at residues 1 to 23 (MPRYGASLRQSCPRSGREQGQDG) is disordered. The first 46 residues, 1 to 46 (MPRYGASLRQSCPRSGREQGQDGTAGAPGLLWMGLVLALALALALA), serve as a signal peptide directing secretion. A Saposin B-type domain is found at 87-171 (GNLTCPICKG…LLGSTCGHWD (85 aa)). An N-linked (GlcNAc...) asparagine glycan is attached at Asn-88. Cystine bridges form between Cys-91–Cys-167, Cys-94–Cys-159, and Cys-122–Cys-133. An N-linked (GlcNAc...) asparagine glycan is attached at Asn-177. Zn(2+)-binding residues include Asp-208 and His-210. Intrachain disulfides connect Cys-223–Cys-228 and Cys-229–Cys-252. Residues Asp-280 and Asn-320 each contribute to the Zn(2+) site. Asn-337 and Asn-397 each carry an N-linked (GlcNAc...) asparagine glycan. Cysteines 387 and 433 form a disulfide. His-427, His-459, and His-461 together coordinate Zn(2+). N-linked (GlcNAc...) asparagine glycosylation occurs at Asn-505. Ser-510 is subject to Phosphoserine; by PKC/PRKCD. Asn-522 is a glycosylation site (N-linked (GlcNAc...) asparagine). Disulfide bonds link Cys-586–Cys-590 and Cys-596–Cys-609.

Belongs to the acid sphingomyelinase family. In terms of assembly, monomer. Interacts with SORT1; the interaction is required for SMPD1 targeting to lysosomes. The cofactor is Zn(2+). In terms of processing, proteolytically processed. Mature lysosomal form arises from C-terminal proteolytic processing of pro-sphingomyelin phosphodiesterase. Post-translationally, this form is generated following cleavage by CASP7 in the extracellular milieu. It shows increased activity. Both lysosomal and secreted forms are glycosylated but they show a differential pattern of glycosylation. In terms of processing, phosphorylated at Ser-510 by PRKCD upon stress stimuli. Phosphorylation is required for secretion.

The protein localises to the lysosome. It is found in the lipid droplet. It localises to the secreted. Its subcellular location is the extracellular space. It carries out the reaction a sphingomyelin + H2O = phosphocholine + an N-acylsphing-4-enine + H(+). The enzyme catalyses N-(octadecanoyl)-sphing-4-enine-1-phosphocholine + H2O = N-octadecanoylsphing-4-enine + phosphocholine + H(+). The catalysed reaction is 1,2-dihexadecanoyl-sn-glycero-3-phosphocholine + H2O = 1,2-dihexadecanoyl-sn-glycerol + phosphocholine + H(+). It catalyses the reaction a 1,2-diacyl-sn-glycero-3-phosphocholine + H2O = phosphocholine + a 1,2-diacyl-sn-glycerol + H(+). With respect to regulation, hydrolysis of liposomal sphingomyelin is stimulated by incorporation of diacylglycerol (DAG), ceramide and free fatty acids into the liposomal membranes. Phosphatidylcholine hydrolysis is inhibited by incorporation of cholesterol, ceramide, DAG, monoacylglycerol and fatty acids. Antidepressants, namely amitriptyline, imipramine, desipramine, fluoxetine, sertraline, escitalopram, and maprotiline inhibit sphingomyelin phosphodiesterase activity. (Microbial infection) The secretory form is activated by P.aeruginosa, this activation results in the release of ceramide in the outer leaflet of the plasma membrane. Its activity is regulated as follows. (Microbial infection) The secretory form is activated by human coronavirus SARS-CoV-2, this activation results in the release of ceramide in the outer leaflet of the plasma membrane. In terms of biological role, converts sphingomyelin to ceramide. Exists as two enzymatic forms that arise from alternative trafficking of a single protein precursor, one that is targeted to the endolysosomal compartment, whereas the other is released extracellularly. However, in response to various forms of stress, lysosomal exocytosis may represent a major source of the secretory form. In the lysosomes, converts sphingomyelin to ceramide. Plays an important role in the export of cholesterol from the intraendolysosomal membranes. Also has phospholipase C activities toward 1,2-diacylglycerolphosphocholine and 1,2-diacylglycerolphosphoglycerol. Modulates stress-induced apoptosis through the production of ceramide. Its function is as follows. When secreted, modulates cell signaling with its ability to reorganize the plasma membrane by converting sphingomyelin to ceramide. Secreted form is increased in response to stress and inflammatory mediators such as IL1B, IFNG or TNF as well as upon infection with bacteria and viruses. Produces the release of ceramide in the outer leaflet of the plasma membrane playing a central role in host defense. Ceramide reorganizes these rafts into larger signaling platforms that are required to internalize P.aeruginosa, induce apoptosis and regulate the cytokine response in infected cells. In wounded cells, the lysosomal form is released extracellularly in the presence of Ca(2+) and promotes endocytosis and plasma membrane repair. Functionally, this form is generated following cleavage by CASP7 in the extracellular milieu in response to bacterial infection. It shows increased ability to convert sphingomyelin to ceramide and promotes plasma membrane repair. Plasma membrane repair by ceramide counteracts the action of gasdermin-D (GSDMD) perforin (PRF1) pores that are formed in response to bacterial infection. In terms of biological role, (Microbial infection) Secretion is activated by bacteria such as P.aeruginosa, N.gonorrhoeae and others, this activation results in the release of ceramide in the outer leaflet of the plasma membrane which facilitates the infection. (Microbial infection) Secretion is activated by human coronaviruses SARS-CoV and SARS-CoV-2 as well as Zaire ebolavirus, this activation results in the release of ceramide in the outer leaflet of the plasma membrane which facilitates the infection. Its function is as follows. Lacks residues that bind the cofactor Zn(2+) and has no enzyme activity. The protein is Sphingomyelin phosphodiesterase of Homo sapiens (Human).